Reading from the N-terminus, the 95-residue chain is Beta-alanine degradation protein BauB (95 aa).

Residues 23-90 (WRFAPGAETG…NASAHEVVFV (68 aa)) form the Cupin type-2 domain.

In terms of biological role, involved in the degradation of beta-alanine. The chain is Beta-alanine degradation protein BauB (bauB) from Pseudomonas aeruginosa (strain ATCC 15692 / DSM 22644 / CIP 104116 / JCM 14847 / LMG 12228 / 1C / PRS 101 / PAO1).